We begin with the raw amino-acid sequence, 701 residues long: A-type ATP synthase subunit I (701 aa).

The next 10 membrane-spanning stretches (helical) occupy residues 340-360 (WEISPIVFLVFTFPILFGLMF), 363-379 (FGNALVLLLFSIWFYRY), 388-408 (IPKLSIILIYSSIVAIITGLL), 435-455 (LYNLWPIPASVSEAIKFLLPF), 468-488 (MIFSVLLGALALFVSSLLGVI), 498-518 (FLFLEKLPLFLLYVVPIFIFM), 555-575 (GIVWWTSFALLYNWAAHAILV), 583-603 (WGSAIAMGFIEGGFEGALLLL), 612-632 (VLVFALSHYYILYAFSYMAYL), and 649-669 (IIILIIGNLLAIGLEGLVVFI).

This sequence belongs to the V-ATPase 116 kDa subunit family. As to quaternary structure, has multiple subunits with at least A(3), B(3), C, D, E, F, H, I and proteolipid K(x).

The protein resides in the cell membrane. Its function is as follows. Component of the A-type ATP synthase that produces ATP from ADP in the presence of a proton gradient across the membrane. This is A-type ATP synthase subunit I from Saccharolobus solfataricus (strain ATCC 35092 / DSM 1617 / JCM 11322 / P2) (Sulfolobus solfataricus).